A 33-amino-acid polypeptide reads, in one-letter code: Dermaseptin-H9 (33 aa).

L33 is modified (leucine amide).

Belongs to the frog skin active peptide (FSAP) family. Dermaseptin subfamily. As to expression, expressed by the skin glands.

It is found in the secreted. Functionally, has antimicrobial activity. The polypeptide is Dermaseptin-H9 (Pithecopus hypochondrialis (Orange-legged leaf frog)).